A 407-amino-acid chain; its full sequence is Na(+)-translocating NADH-quinone reductase subunit F (407 aa).

Residues 3–23 (IILGVVMFTLIVLALVLVILF) traverse the membrane as a helical segment. A 2Fe-2S ferredoxin-type domain is found at 32-126 (GDITISVNGD…DMDIELPEEI (95 aa)). [2Fe-2S] cluster is bound by residues cysteine 69, cysteine 75, cysteine 78, and cysteine 110. The FAD-binding FR-type domain maps to 129-269 (VKKWECTVIS…SGPFGEFFAK (141 aa)). Positions 272-389 (DAEMVFIGGG…PMMNAAVIGM (118 aa)) are catalytic.

The protein belongs to the NqrF family. In terms of assembly, composed of six subunits; NqrA, NqrB, NqrC, NqrD, NqrE and NqrF. Requires [2Fe-2S] cluster as cofactor. FAD is required as a cofactor.

It localises to the cell inner membrane. It carries out the reaction a ubiquinone + n Na(+)(in) + NADH + H(+) = a ubiquinol + n Na(+)(out) + NAD(+). Functionally, NQR complex catalyzes the reduction of ubiquinone-1 to ubiquinol by two successive reactions, coupled with the transport of Na(+) ions from the cytoplasm to the periplasm. The first step is catalyzed by NqrF, which accepts electrons from NADH and reduces ubiquinone-1 to ubisemiquinone by a one-electron transfer pathway. This is Na(+)-translocating NADH-quinone reductase subunit F from Vibrio parahaemolyticus serotype O3:K6 (strain RIMD 2210633).